The chain runs to 319 residues: tRNA dimethylallyltransferase (319 aa).

11–18 (GPTCSGKS) is an ATP binding site. Substrate is bound at residue 13–18 (TCSGKS). 2 interaction with substrate tRNA regions span residues 36 to 39 (DSMQ) and 160 to 164 (QRIAR).

This sequence belongs to the IPP transferase family. As to quaternary structure, monomer. Mg(2+) is required as a cofactor.

The catalysed reaction is adenosine(37) in tRNA + dimethylallyl diphosphate = N(6)-dimethylallyladenosine(37) in tRNA + diphosphate. Catalyzes the transfer of a dimethylallyl group onto the adenine at position 37 in tRNAs that read codons beginning with uridine, leading to the formation of N6-(dimethylallyl)adenosine (i(6)A). The chain is tRNA dimethylallyltransferase from Granulibacter bethesdensis (strain ATCC BAA-1260 / CGDNIH1).